A 355-amino-acid polypeptide reads, in one-letter code: Holliday junction branch migration complex subunit RuvB (355 aa).

Residues M1–R43 are disordered. The segment at M4 to Y203 is large ATPase domain (RuvB-L). Positions F7 to I17 are enriched in basic and acidic residues. Residues L42, R43, G84, K87, T88, S89, E150–F152, R193, Y203, and R240 contribute to the ATP site. Residue T88 coordinates Mg(2+). The tract at residues E204–G274 is small ATPAse domain (RuvB-S). The segment at H277 to G355 is head domain (RuvB-H). The DNA site is built by R313, R332, and R337.

The protein belongs to the RuvB family. Homohexamer. Forms an RuvA(8)-RuvB(12)-Holliday junction (HJ) complex. HJ DNA is sandwiched between 2 RuvA tetramers; dsDNA enters through RuvA and exits via RuvB. An RuvB hexamer assembles on each DNA strand where it exits the tetramer. Each RuvB hexamer is contacted by two RuvA subunits (via domain III) on 2 adjacent RuvB subunits; this complex drives branch migration. In the full resolvosome a probable DNA-RuvA(4)-RuvB(12)-RuvC(2) complex forms which resolves the HJ.

The protein resides in the cytoplasm. The catalysed reaction is ATP + H2O = ADP + phosphate + H(+). The RuvA-RuvB-RuvC complex processes Holliday junction (HJ) DNA during genetic recombination and DNA repair, while the RuvA-RuvB complex plays an important role in the rescue of blocked DNA replication forks via replication fork reversal (RFR). RuvA specifically binds to HJ cruciform DNA, conferring on it an open structure. The RuvB hexamer acts as an ATP-dependent pump, pulling dsDNA into and through the RuvAB complex. RuvB forms 2 homohexamers on either side of HJ DNA bound by 1 or 2 RuvA tetramers; 4 subunits per hexamer contact DNA at a time. Coordinated motions by a converter formed by DNA-disengaged RuvB subunits stimulates ATP hydrolysis and nucleotide exchange. Immobilization of the converter enables RuvB to convert the ATP-contained energy into a lever motion, pulling 2 nucleotides of DNA out of the RuvA tetramer per ATP hydrolyzed, thus driving DNA branch migration. The RuvB motors rotate together with the DNA substrate, which together with the progressing nucleotide cycle form the mechanistic basis for DNA recombination by continuous HJ branch migration. Branch migration allows RuvC to scan DNA until it finds its consensus sequence, where it cleaves and resolves cruciform DNA. The sequence is that of Holliday junction branch migration complex subunit RuvB from Rubrobacter xylanophilus (strain DSM 9941 / JCM 11954 / NBRC 16129 / PRD-1).